The following is a 213-amino-acid chain: Peroxisomal protein 2 (213 aa).

Positions 211-213 (ETL) match the Peroxisomal target signal 1 (PTS1) motif.

It belongs to the PXP2 family.

The protein localises to the peroxisome matrix. Its subcellular location is the cytoplasm. It localises to the cytosol. It is found in the nucleus. Its function is as follows. Probably involved in peroxisome formation or maintenance as well as in amino acid metabolism. This Schizosaccharomyces pombe (strain 972 / ATCC 24843) (Fission yeast) protein is Peroxisomal protein 2.